We begin with the raw amino-acid sequence, 2217 residues long: DNA polymerase epsilon catalytic subunit A (2217 aa).

Cysteine 2104, cysteine 2107, cysteine 2126, and cysteine 2129 together coordinate Zn(2+). A CysA-type zinc finger spans residues 2104–2129 (CEYCSYVSDLDLCRDGLDGKFQCPRC). [4Fe-4S] cluster contacts are provided by cysteine 2160, cysteine 2163, cysteine 2175, and cysteine 2177. The CysB motif motif lies at 2160 to 2177 (CEKCHTVKRDLMSTNCNC).

It belongs to the DNA polymerase type-B family. As to quaternary structure, heterotetramer. Consists of 4 subunits: POL2, DPB2, DPB3 and DPB4. Requires [4Fe-4S] cluster as cofactor.

The protein localises to the nucleus. The catalysed reaction is DNA(n) + a 2'-deoxyribonucleoside 5'-triphosphate = DNA(n+1) + diphosphate. Functionally, DNA polymerase II participates in chromosomal DNA replication. The protein is DNA polymerase epsilon catalytic subunit A (POL2) of Candida glabrata (strain ATCC 2001 / BCRC 20586 / JCM 3761 / NBRC 0622 / NRRL Y-65 / CBS 138) (Yeast).